We begin with the raw amino-acid sequence, 124 residues long: MNALGRHILAEIYGCDAAILNNRNLIEKIMVESALEAGAEVREVAFHKFSPQGVSGVVVISESHLAIHTWPELGYAAVDVFTCGEKVNPWDACNYLTERFKAKHMTATEVKRGVFEEPVKVANL.

Residue serine 63 is the Schiff-base intermediate with substrate; via pyruvic acid of the active site. Serine 63 is modified (pyruvic acid (Ser); by autocatalysis). Histidine 68 serves as the catalytic Proton acceptor; for processing activity. Cysteine 83 serves as the catalytic Proton donor; for catalytic activity.

Belongs to the prokaryotic AdoMetDC family. Type 1 subfamily. In terms of assembly, heterotetramer of two alpha and two beta chains arranged as a dimer of alpha/beta heterodimers. Pyruvate is required as a cofactor. In terms of processing, is synthesized initially as an inactive proenzyme. Formation of the active enzyme involves a self-maturation process in which the active site pyruvoyl group is generated from an internal serine residue via an autocatalytic post-translational modification. Two non-identical subunits are generated from the proenzyme in this reaction, and the pyruvate is formed at the N-terminus of the alpha chain, which is derived from the carboxyl end of the proenzyme. The post-translation cleavage follows an unusual pathway, termed non-hydrolytic serinolysis, in which the side chain hydroxyl group of the serine supplies its oxygen atom to form the C-terminus of the beta chain, while the remainder of the serine residue undergoes an oxidative deamination to produce ammonia and the pyruvoyl group blocking the N-terminus of the alpha chain.

It catalyses the reaction S-adenosyl-L-methionine + H(+) = S-adenosyl 3-(methylsulfanyl)propylamine + CO2. It functions in the pathway amine and polyamine biosynthesis; S-adenosylmethioninamine biosynthesis; S-adenosylmethioninamine from S-adenosyl-L-methionine: step 1/1. In terms of biological role, catalyzes the decarboxylation of S-adenosylmethionine to S-adenosylmethioninamine (dcAdoMet), the propylamine donor required for the synthesis of the polyamines spermine and spermidine from the diamine putrescine. This is S-adenosylmethionine decarboxylase proenzyme from Acetivibrio thermocellus (strain ATCC 27405 / DSM 1237 / JCM 9322 / NBRC 103400 / NCIMB 10682 / NRRL B-4536 / VPI 7372) (Clostridium thermocellum).